Reading from the N-terminus, the 323-residue chain is Acetyl-coenzyme A carboxylase carboxyl transferase subunit alpha (323 aa).

The CoA carboxyltransferase C-terminal domain maps to 39–293; the sequence is RLAGKSQQLT…KRSLAESLRQ (255 aa).

This sequence belongs to the AccA family. As to quaternary structure, acetyl-CoA carboxylase is a heterohexamer composed of biotin carboxyl carrier protein (AccB), biotin carboxylase (AccC) and two subunits each of ACCase subunit alpha (AccA) and ACCase subunit beta (AccD).

It localises to the cytoplasm. The catalysed reaction is N(6)-carboxybiotinyl-L-lysyl-[protein] + acetyl-CoA = N(6)-biotinyl-L-lysyl-[protein] + malonyl-CoA. Its pathway is lipid metabolism; malonyl-CoA biosynthesis; malonyl-CoA from acetyl-CoA: step 1/1. Its function is as follows. Component of the acetyl coenzyme A carboxylase (ACC) complex. First, biotin carboxylase catalyzes the carboxylation of biotin on its carrier protein (BCCP) and then the CO(2) group is transferred by the carboxyltransferase to acetyl-CoA to form malonyl-CoA. The sequence is that of Acetyl-coenzyme A carboxylase carboxyl transferase subunit alpha from Cupriavidus pinatubonensis (strain JMP 134 / LMG 1197) (Cupriavidus necator (strain JMP 134)).